Reading from the N-terminus, the 312-residue chain is MLLVKMTTHIFHADDLLQALQQAKAEKNFSSVFSLDWDKLRTAKRNTTVKYVTVNVIVKGKKAPLMFNFQNEKHVGTIPPSTDEEVIRMNAENPKFLVKKRDRDPCLQFNKYKISPPLEDDGLTVKKNEQGEEIYPGDEEKSKLFQIIELLEEAFEDAVQKGPEAMKTKHVIKLIQRKISNSAVKNADKPLPNPIARIRIKINPATSILTPILLDKNKPITLQNGKTSFEELKDEDGVKANPDNIHKLIESHSMHDGIINARSICISNMGISFPLCLEMGVVKVFEKNNGIDVNSIYGSDDISTLVNQIAIA.

This sequence belongs to the asfivirus CP312R family.

The protein localises to the virion. This is an uncharacterized protein from African swine fever virus (strain Badajoz 1971 Vero-adapted) (Ba71V).